We begin with the raw amino-acid sequence, 395 residues long: Choline/ethanolamine kinase (395 aa).

Ala2 carries the N-acetylalanine modification. ATP contacts are provided by residues 75-81 (SGGLSNL), Arg104, 146-152 (QYIPSRP), Gln244, and Asp264. 77–79 (GLS) contacts phosphocholine.

Belongs to the choline/ethanolamine kinase family. In terms of assembly, homodimer, and heterodimer with CHKA.

It catalyses the reaction choline + ATP = phosphocholine + ADP + H(+). The enzyme catalyses ethanolamine + ATP = phosphoethanolamine + ADP + H(+). Its pathway is phospholipid metabolism; phosphatidylethanolamine biosynthesis; phosphatidylethanolamine from ethanolamine: step 1/3. In terms of biological role, has a key role in phospholipid metabolism, and catalyzes the first step of phosphatidylethanolamine and phosphatidylcholine biosynthesis. The sequence is that of Choline/ethanolamine kinase (CHKB) from Homo sapiens (Human).